The sequence spans 890 residues: DNA mismatch repair protein MutS (890 aa).

607–614 (GPNMSGKS) lines the ATP pocket. The disordered stretch occupies residues 832-851 (ESQLSFFGGEQSSKKQDKPL).

Belongs to the DNA mismatch repair MutS family.

This protein is involved in the repair of mismatches in DNA. It is possible that it carries out the mismatch recognition step. This protein has a weak ATPase activity. The polypeptide is DNA mismatch repair protein MutS (Bacillus cereus (strain B4264)).